Here is a 510-residue protein sequence, read N- to C-terminus: ATP synthase subunit alpha (510 aa).

Position 169-176 (169-176 (GDRQTGKT)) interacts with ATP.

This sequence belongs to the ATPase alpha/beta chains family. As to quaternary structure, F-type ATPases have 2 components, CF(1) - the catalytic core - and CF(0) - the membrane proton channel. CF(1) has five subunits: alpha(3), beta(3), gamma(1), delta(1), epsilon(1). CF(0) has three main subunits: a(1), b(2) and c(9-12). The alpha and beta chains form an alternating ring which encloses part of the gamma chain. CF(1) is attached to CF(0) by a central stalk formed by the gamma and epsilon chains, while a peripheral stalk is formed by the delta and b chains.

The protein localises to the cell inner membrane. It carries out the reaction ATP + H2O + 4 H(+)(in) = ADP + phosphate + 5 H(+)(out). In terms of biological role, produces ATP from ADP in the presence of a proton gradient across the membrane. The alpha chain is a regulatory subunit. In Anaeromyxobacter dehalogenans (strain 2CP-1 / ATCC BAA-258), this protein is ATP synthase subunit alpha.